The following is a 186-amino-acid chain: MTKSTYVELGEEKTSNQKGNMKRGVSILDFILRLIAIVATLASAIAMGTTDESLPFFTQFVRFRANYDDLPTLRFFVVASAIVSGYLILSLPLSILHIIRSSAGMTRVIFIILDTVMLGLLTAGSSAAASIVYLAHKGNRKANWFAFCQQYNSFCERISGSLIGSFIAIPLFIMLILLSALVLSRR.

Residues 1-26 (MTKSTYVELGEEKTSNQKGNMKRGVS) are Cytoplasmic-facing. Residues 27 to 47 (ILDFILRLIAIVATLASAIAM) traverse the membrane as a helical segment. Topologically, residues 48-74 (GTTDESLPFFTQFVRFRANYDDLPTLR) are extracellular. The helical transmembrane segment at 75 to 95 (FFVVASAIVSGYLILSLPLSI) threads the bilayer. At 96-107 (LHIIRSSAGMTR) the chain is on the cytoplasmic side. The helical transmembrane segment at 108–128 (VIFIILDTVMLGLLTAGSSAA) threads the bilayer. At 129–161 (ASIVYLAHKGNRKANWFAFCQQYNSFCERISGS) the chain is on the extracellular side. A helical membrane pass occupies residues 162–182 (LIGSFIAIPLFIMLILLSALV). Over 183 to 186 (LSRR) the chain is Cytoplasmic.

Belongs to the Casparian strip membrane proteins (CASP) family. In terms of assembly, homodimer and heterodimers.

It localises to the cell membrane. Its function is as follows. Regulates membrane-cell wall junctions and localized cell wall deposition. Required for establishment of the Casparian strip membrane domain (CSD) and the subsequent formation of Casparian strips, a cell wall modification of the root endodermis that determines an apoplastic barrier between the intraorganismal apoplasm and the extraorganismal apoplasm and prevents lateral diffusion. The polypeptide is Casparian strip membrane protein 3 (Medicago truncatula (Barrel medic)).